The sequence spans 533 residues: Putative replication factor C large subunit (533 aa).

The segment covering M1 to I11 has biased composition (polar residues). The tract at residues M1–K31 is disordered. Basic and acidic residues predominate over residues V17–K31.

It belongs to the activator 1 large subunit family.

Its function is as follows. Part of the RFC clamp loader complex which loads the PCNA sliding clamp onto DNA. In Acanthamoeba polyphaga (Amoeba), this protein is Putative replication factor C large subunit.